Consider the following 474-residue polypeptide: Tumor necrosis factor receptor superfamily member 1B (474 aa).

A signal peptide spans 1–22 (MAPAALWVALVFELQLWATGHT). At 23-258 (VPAQVVLTPY…PIIEQSTKGG (236 aa)) the chain is on the extracellular side. The O-linked (GalNAc...) threonine glycan is linked to Thr30. 4 TNFR-Cys repeats span residues 39–77 (ECQISQEYYDRKAQMCCAKCPPGQYVKHFCNKTSDTVCA), 78–119 (DCEA…NRVC), 120–164 (ACEA…VLCK), and 165–203 (ACAPGTFSDTTSSTDVCRPHRICSILAIPGNASTDAVCA). Disulfide bonds link Cys40–Cys54, Cys55–Cys68, Cys58–Cys76, Cys79–Cys94, Cys97–Cys111, Cys101–Cys119, Cys121–Cys127, Cys136–Cys145, Cys139–Cys163, and Cys166–Cys181. Asn69 is a glycosylation site (N-linked (GlcNAc...) asparagine). Asn195 carries N-linked (GlcNAc...) asparagine glycosylation. Thr208 and Thr224 each carry an O-linked (GalNAc...) threonine glycan. Positions 220-243 (QPEPTRSQPLDQEPGPSQTPSILT) are disordered. A helical transmembrane segment spans residues 259–288 (ISLPIGLIVGVTSLGLLMLGLVNCIILVQR). Residues 289 to 474 (KKKPSCLQRD…WFDQIAVKVA (186 aa)) lie on the Cytoplasmic side of the membrane. Disordered stretches follow at residues 295–314 (LQRDAKVPHVPDEKSQDAVG), 321–378 (LTTA…GSHG), and 397–463 (SQCS…PSQA). Residues 297 to 310 (RDAKVPHVPDEKSQ) show a composition bias toward basic and acidic residues. Low complexity-rich tracts occupy residues 324–338 (APSSSSSSLESSASA) and 363–378 (ARASSRISDSSHGSHG). Position 331 is a phosphoserine (Ser331). Polar residues predominate over residues 429–442 (ECPSQSPCETTETL).

As to quaternary structure, binds to TRAF2. Interacts with BMX. Interacts (activated form) with XPNPEP3.

The protein resides in the membrane. Functionally, receptor with high affinity for TNFSF2/TNF-alpha and approximately 5-fold lower affinity for homotrimeric TNFSF1/lymphotoxin-alpha. The TRAF1/TRAF2 complex recruits the apoptotic suppressors BIRC2 and BIRC3 to TNFRSF1B/TNFR2. This Mus musculus (Mouse) protein is Tumor necrosis factor receptor superfamily member 1B (Tnfrsf1b).